Consider the following 178-residue polypeptide: Zinc finger protein ZAT11 (178 aa).

2 consecutive C2H2-type zinc fingers follow at residues Phe47–His69 and His94–His116.

As to expression, expressed in leaves.

It localises to the nucleus. Functionally, probable transcription factor that may be involved in stress responses. The polypeptide is Zinc finger protein ZAT11 (ZAT11) (Arabidopsis thaliana (Mouse-ear cress)).